The following is a 191-amino-acid chain: Vascular endothelial growth factor A (191 aa).

Residues 1-26 form the signal peptide; it reads MNFLLTWIHWGLAALLYFHNAKVLQA. 3 disulfide bridges follow: cysteine 52–cysteine 94, cysteine 83–cysteine 128, and cysteine 87–cysteine 130. Asparagine 101 is a glycosylation site (N-linked (GlcNAc...) asparagine).

The protein belongs to the PDGF/VEGF growth factor family. Homodimer; disulfide-linked. Also found as heterodimer with PGF. Expressed by the venom gland, and probably other tissues.

It localises to the secreted. In terms of biological role, growth factor active in angiogenesis, vasculogenesis and endothelial cell growth. Induces endothelial cell proliferation, promotes cell migration, inhibits apoptosis and induces permeabilization of blood vessels. Binds to heparan sulfate and heparin. The sequence is that of Vascular endothelial growth factor A from Bitis gabonica (Gaboon adder).